The following is a 60-amino-acid chain: Mastoparan-VT5 (60 aa).

Residues 1 to 27 (MKNTILILFTAFIALLGFFGMIAEPLA) form the signal peptide. 4 AXPX repeats span residues 27–30 (ADPL), 31–34 (ADPL), 37–40 (ADPD), and 41–44 (ADPE). The propeptide occupies 28–45 (DPLADPLPDADPDADPET).

It belongs to the MCD family. Mastoparan subfamily. As to expression, expressed by the venom gland.

The protein resides in the secreted. Its function is as follows. The synthetic peptide shows weak antimicrobial activities against a few Gram-positive bacteria (only 2 on the 11 strains tested) and the fungus C.albicans. Does not show activity against all the Gram-negative bacteria tested. Exhibits little hemolytic activity against washed human erythrocytes. This is Mastoparan-VT5 from Vespa tropica (Greater banded hornet).